The chain runs to 362 residues: tRNA/tmRNA (uracil-C(5))-methyltransferase (362 aa).

Residues Gln186, Tyr214, Asn219, Glu235, and Asp295 each coordinate S-adenosyl-L-methionine. The Nucleophile role is filled by Cys320. The Proton acceptor role is filled by Glu354.

Belongs to the class I-like SAM-binding methyltransferase superfamily. RNA M5U methyltransferase family. TrmA subfamily.

It carries out the reaction uridine(54) in tRNA + S-adenosyl-L-methionine = 5-methyluridine(54) in tRNA + S-adenosyl-L-homocysteine + H(+). It catalyses the reaction uridine(341) in tmRNA + S-adenosyl-L-methionine = 5-methyluridine(341) in tmRNA + S-adenosyl-L-homocysteine + H(+). Its function is as follows. Dual-specificity methyltransferase that catalyzes the formation of 5-methyluridine at position 54 (m5U54) in all tRNAs, and that of position 341 (m5U341) in tmRNA (transfer-mRNA). This Stutzerimonas stutzeri (strain A1501) (Pseudomonas stutzeri) protein is tRNA/tmRNA (uracil-C(5))-methyltransferase.